The primary structure comprises 287 residues: Myogenin (287 aa).

Phosphoserine; by CaMK2G is present on residues Ser77 and Ser79. A bHLH domain is found at 81 to 132 (DRRRAATLREKRRLKKVNEAFEALKRSTLLNPNQRLPKVEILRSAIQYIERL). Thr87 is subject to Phosphothreonine; by CaMK2G.

Homodimer and heterodimer with E12; heterodimerization enhances MYOG DNA-binding and transcriptional activities. Interacts with SMARCA4/BRG1/BAF190A. Interacts (via C-terminal region) with SSRP1 and SUPT16H; the interaction is indicative of an interaction with the FACT complex. Interacts with CSRP3. Post-translationally, phosphorylated by CAMK2G on threonine and serine amino acids in a muscle activity-dependent manner. Phosphorylation of Thr-87 impairs both DNA-binding and trans-activation functions in contracting muscles. As to expression, expressed in muscle (at protein level).

It is found in the nucleus. In terms of biological role, acts as a transcriptional activator that promotes transcription of muscle-specific target genes and plays a role in muscle differentiation, cell cycle exit and muscle atrophy. Essential for the development of functional embryonic skeletal fiber muscle differentiation. However is dispensable for postnatal skeletal muscle growth; phosphorylation by CAMK2G inhibits its transcriptional activity in respons to muscle activity. Required for the recruitment of the FACT complex to muscle-specific promoter regions, thus promoting gene expression initiation. During terminal myoblast differentiation, plays a role as a strong activator of transcription at loci with an open chromatin structure previously initiated by MYOD1. Together with MYF5 and MYOD1, co-occupies muscle-specific gene promoter core regions during myogenesis. Also cooperates with myocyte-specific enhancer factor MEF2D and BRG1-dependent recruitment of SWI/SNF chromatin-remodeling enzymes to alter chromatin structure at myogenic late gene promoters. Facilitates cell cycle exit during terminal muscle differentiation through the up-regulation of miR-20a expression, which in turn represses genes involved in cell cycle progression. Binds to the E-box containing (E1) promoter region of the miR-20a gene. Also plays a role in preventing reversal of muscle cell differentiation. Contributes to the atrophy-related gene expression in adult denervated muscles. Induces fibroblasts to differentiate into myoblasts. This chain is Myogenin (Myog), found in Rattus norvegicus (Rat).